The following is a 393-amino-acid chain: Glutamyl-tRNA reductase (393 aa).

Residues 47-50 (TCGR), Ser98, 103-105 (ETD), and Gln109 each bind substrate. Cys48 functions as the Nucleophile in the catalytic mechanism. 177–182 (GAGAVG) contributes to the NADP(+) binding site.

This sequence belongs to the glutamyl-tRNA reductase family. As to quaternary structure, homodimer.

The enzyme catalyses (S)-4-amino-5-oxopentanoate + tRNA(Glu) + NADP(+) = L-glutamyl-tRNA(Glu) + NADPH + H(+). Its pathway is porphyrin-containing compound metabolism; protoporphyrin-IX biosynthesis; 5-aminolevulinate from L-glutamyl-tRNA(Glu): step 1/2. Functionally, catalyzes the NADPH-dependent reduction of glutamyl-tRNA(Glu) to glutamate 1-semialdehyde (GSA). The protein is Glutamyl-tRNA reductase of Pyrobaculum islandicum (strain DSM 4184 / JCM 9189 / GEO3).